Here is a 244-residue protein sequence, read N- to C-terminus: ATP synthase subunit O, mitochondrial (244 aa).

The transit peptide at 1-45 directs the protein to the mitochondrion; the sequence is MAMTGRARSMGFSILQKALSSAQRSNAHRSILCPTLSNSELLRNY.

Belongs to the ATPase delta chain family. As to quaternary structure, F-type ATPases have 2 components, CF(1) - the catalytic core - and CF(0) - the membrane proton channel. CF(1) has five subunits: alpha(3), beta(3), gamma(1), delta(1), epsilon(1). CF(0) has three main subunits: a, b and c.

The protein localises to the mitochondrion. The protein resides in the mitochondrion inner membrane. Functionally, mitochondrial membrane ATP synthase (F(1)F(0) ATP synthase or Complex V) produces ATP from ADP in the presence of a proton gradient across the membrane which is generated by electron transport complexes of the respiratory chain. F-type ATPases consist of two structural domains, F(1) - containing the extramembraneous catalytic core and F(0) - containing the membrane proton channel, linked together by a central stalk and a peripheral stalk. During catalysis, ATP synthesis in the catalytic domain of F(1) is coupled via a rotary mechanism of the central stalk subunits to proton translocation. Part of the complex F(0) domain and the peripheric stalk, which acts as a stator to hold the catalytic alpha(3)beta(3) subcomplex and subunit a/ATP6 static relative to the rotary elements. The sequence is that of ATP synthase subunit O, mitochondrial from Ipomoea batatas (Sweet potato).